The chain runs to 156 residues: Phosphopantetheine adenylyltransferase (156 aa).

Belongs to the eukaryotic CoaD family.

The protein resides in the cytoplasm. The catalysed reaction is (R)-4'-phosphopantetheine + ATP + H(+) = 3'-dephospho-CoA + diphosphate. The protein operates within cofactor biosynthesis; coenzyme A biosynthesis. Its function is as follows. Reversibly transfers an adenylyl group from ATP to 4'-phosphopantetheine, yielding dephospho-CoA (dPCoA) and pyrophosphate. The sequence is that of Phosphopantetheine adenylyltransferase from Methanosarcina acetivorans (strain ATCC 35395 / DSM 2834 / JCM 12185 / C2A).